The sequence spans 304 residues: Fluoroacetate dehalogenase (304 aa).

One can recognise an AB hydrolase-1 domain in the interval 26–151 (PALLLLHGFP…FVARAYWHWY (126 aa)). Asp104 acts as the Nucleophile in catalysis. Positions 105, 108, 149, 150, and 212 each coordinate fluoroacetate. Residue His271 is the Proton acceptor of the active site.

It belongs to the AB hydrolase superfamily. Epoxide hydrolase family. Homodimer.

The catalysed reaction is a haloacetate + H2O = a halide anion + glycolate + H(+). The enzyme catalyses fluoroacetate + H2O = fluoride + glycolate + H(+). Its function is as follows. Catalyzes the hydrolytic defluorination of fluoroacetate to produce glycolate. Has only very low activity towards chloroacetate and bromoacetate. This chain is Fluoroacetate dehalogenase (fac-dex), found in Burkholderia sp.